Here is a 226-residue protein sequence, read N- to C-terminus: UPF0758 protein M6_Spy0838 (226 aa).

Residues 103–225 enclose the MPN domain; that stretch reads SVLTSVQVAE…YYSFREKSTL (123 aa). Positions 174, 176, and 187 each coordinate Zn(2+). The JAMM motif signature appears at 174–187; it reads HNHPSGNIEPSSND.

The protein belongs to the UPF0758 family.

This chain is UPF0758 protein M6_Spy0838, found in Streptococcus pyogenes serotype M6 (strain ATCC BAA-946 / MGAS10394).